A 374-amino-acid chain; its full sequence is MSKGIVLLAAGGTGGHVFPAEALAFKLKERGYSVHLVTDSRAERFAGKFPAEEIHVVPSATIGSKNPVAVARSLWTLWSGMRAAKKLIQRLKPVIVVGFGGYPTVPPLLAATRLGIASMLHEQNAVMGRANKALAPRVKAIAGGFLQESGDVFSDKTVATGNPVRPAILAAAEQPYHPSHPGEPFNLVVFGGSQGAQYFSKAMPTAISLLDDELRARLRVTQQVRPEDMEMVRGCVAQLQMGADIAPFFNDMAERLAKAHLVICRSGASTVSEISVIGRPAVLVPYPHALDHDQAANAAALAATGGAKVIVQSELSPERIASILSHVMNDPEKLSHMAAAAKLAGKPDAANLLADMVEAIAAGKTVSEFKRTRA.

Residues 13 to 15 (TGG), Asn124, Arg165, Ser193, and Gln294 each bind UDP-N-acetyl-alpha-D-glucosamine.

The protein belongs to the glycosyltransferase 28 family. MurG subfamily.

Its subcellular location is the cell inner membrane. It catalyses the reaction di-trans,octa-cis-undecaprenyl diphospho-N-acetyl-alpha-D-muramoyl-L-alanyl-D-glutamyl-meso-2,6-diaminopimeloyl-D-alanyl-D-alanine + UDP-N-acetyl-alpha-D-glucosamine = di-trans,octa-cis-undecaprenyl diphospho-[N-acetyl-alpha-D-glucosaminyl-(1-&gt;4)]-N-acetyl-alpha-D-muramoyl-L-alanyl-D-glutamyl-meso-2,6-diaminopimeloyl-D-alanyl-D-alanine + UDP + H(+). The protein operates within cell wall biogenesis; peptidoglycan biosynthesis. Its function is as follows. Cell wall formation. Catalyzes the transfer of a GlcNAc subunit on undecaprenyl-pyrophosphoryl-MurNAc-pentapeptide (lipid intermediate I) to form undecaprenyl-pyrophosphoryl-MurNAc-(pentapeptide)GlcNAc (lipid intermediate II). The protein is UDP-N-acetylglucosamine--N-acetylmuramyl-(pentapeptide) pyrophosphoryl-undecaprenol N-acetylglucosamine transferase of Rhizobium etli (strain CIAT 652).